The primary structure comprises 151 residues: Trivalent organoarsenical cleaving enzyme (151 aa).

The region spanning 2–118 (SRVQLALRVP…GGEPWEVYVV (117 aa)) is the VOC domain. Gln-5 provides a ligand contact to Fe(2+). Asp-61 serves as a coordination point for roxarsone (III). His-62 contributes to the Fe(2+) binding site. Positions 95 and 96 each coordinate roxarsone (III). Glu-114 provides a ligand contact to Fe(2+).

Monomer. It depends on Fe(2+) as a cofactor.

The enzyme catalyses methylarsonous acid + AH2 + O2 = arsenite + methanol + A + H(+). It carries out the reaction roxarsone (III) + AH2 + O2 = 4-hydroxy-3-nitrocyclohexa-2,5-dien-1-one + arsenite + A + H(+). It catalyses the reaction nitarsone (III) + AH2 + O2 = 4-nitrocyclohexa-2,5-dien-1-one + arsenite + A + H(+). The catalysed reaction is 4-aminophenylarsonous acid + AH2 + O2 = 4-aminocyclohexa-2,5-dien-1-one + arsenite + A. In terms of biological role, nonheme iron-dependent dioxygenase that can break carbon-arsenic bonds, playing a role in the detoxification of environmental organoarsenical compounds. Catalyzes the oxygen-dependent demethylation of highly toxic methylarsonous acid (MAs(III)) to arsenite, which can then be exported out of the cell. Can also cleave the C-As bond in several trivalent aromatic arsenicals, including roxarsone (III), nitarsone (III) and (4-aminophenyl)arsonous acid. Organoarsenical degradation by this enzyme is proposed to have a significant impact on the arsenic biogeocycle that maintains a balance between organic and inorganic species. This chain is Trivalent organoarsenical cleaving enzyme, found in Thermomonospora curvata (strain ATCC 19995 / DSM 43183 / JCM 3096 / KCTC 9072 / NBRC 15933 / NCIMB 10081 / Henssen B9).